The following is a 202-amino-acid chain: Small ribosomal subunit protein uS2 (202 aa).

It belongs to the universal ribosomal protein uS2 family. Part of the 30S ribosomal subunit.

The protein is Small ribosomal subunit protein uS2 of Pyrococcus furiosus (strain ATCC 43587 / DSM 3638 / JCM 8422 / Vc1).